A 489-amino-acid chain; its full sequence is MKELDPKNDISEDKLSVVGEATGGPTRNGARGPGSEGVWEPGSWPERPRGDAGAEWEPLGIPQGNKLLGGSVPACHELKAFANQGCVLVPPRLDDPTEKGACPPVRRGKNFSSTSDLSKPPMPCEEKKTYDCSECGKAFSRSSSLIKHQRIHTGEKPFECDTCGKHFIERSSLTIHQRVHTGEKPYACGDCGKAFSQRMNLTVHQRTHTGEKPYVCDVCGKAFRKTSSLTQHERIHTGEKPYACGDCGKAFSQNMHLIVHQRTHTGEKPYVCPECGRAFSQNMHLTEHQRTHTGEKPYACKECGKAFNKSSSLTLHQRNHTGEKPYVCGECGKAFSQSSYLIQHQRFHIGVKPFECSECGKAFSKNSSLTQHQRIHTGEKPYECYICKKHFTGRSSLIVHQIVHTGEKPYVCGECGKAFSQSAYLIEHQRIHTGEKPYRCGQCGKSFIKNSSLTVHQRIHTGEKPYRCGECGKTFSRNTNLTRHLRIHT.

Basic and acidic residues predominate over residues 1–15 (MKELDPKNDISEDKL). Disordered stretches follow at residues 1–61 (MKEL…PLGI) and 98–122 (EKGACPPVRRGKNFSSTSDLSKPPM). 13 C2H2-type zinc fingers span residues 130–152 (YDCSECGKAFSRSSSLIKHQRIH), 158–180 (FECDTCGKHFIERSSLTIHQRVH), 186–208 (YACGDCGKAFSQRMNLTVHQRTH), 214–236 (YVCDVCGKAFRKTSSLTQHERIH), 242–264 (YACGDCGKAFSQNMHLIVHQRTH), 270–292 (YVCPECGRAFSQNMHLTEHQRTH), 298–320 (YACKECGKAFNKSSSLTLHQRNH), 326–348 (YVCGECGKAFSQSSYLIQHQRFH), 354–376 (FECSECGKAFSKNSSLTQHQRIH), 382–404 (YECYICKKHFTGRSSLIVHQIVH), 410–432 (YVCGECGKAFSQSAYLIEHQRIH), 438–460 (YRCGQCGKSFIKNSSLTVHQRIH), and 466–488 (YRCGECGKTFSRNTNLTRHLRIH).

This sequence belongs to the krueppel C2H2-type zinc-finger protein family. As to expression, highly expressed in placenta, followed by brain, testis, pancreas, heart, small intestine, muscle, uterus, prostate and peripheral blood leukocytes. Not detected in liver, lung, colon, stomach, salivary and thyroid gland.

Its subcellular location is the nucleus. Functionally, may be involved in transcriptional regulation. In Homo sapiens (Human), this protein is Endothelial zinc finger protein induced by tumor necrosis factor alpha (ZNF71).